The following is a 290-amino-acid chain: Lipid phosphate phosphatase 2 (290 aa).

3 consecutive transmembrane segments (helical) span residues W26–H46, W69–I89, and V93–I113. Residue N142 is glycosylated (N-linked (GlcNAc...) asparagine). The next 3 membrane-spanning stretches (helical) occupy residues S162–L182, G193–V213, and V226–P246.

The protein belongs to the PA-phosphatase related phosphoesterase family. In terms of tissue distribution, expressed in roots, stems, leaves, buds, flowers and siliques.

Its subcellular location is the membrane. Its activity is regulated as follows. PA phosphatase activity not inhibited by N-ethylmaleimide. In terms of biological role, may play a general 'housekeeping role' in lipid metabolism. Exhibits both diacylglycerol pyrophosphate (DGPP) phosphatase and phosphatidate (PA) phosphatase activities with no preference for either substrate. May play a role downstream of the ABA signaling pathway during seed germination and in stomatal movement in leaves. This is Lipid phosphate phosphatase 2 (LPP2) from Arabidopsis thaliana (Mouse-ear cress).